The following is a 480-amino-acid chain: ATP synthase subunit beta, chloroplastic (480 aa).

Gly-161–Thr-168 contacts ATP.

It belongs to the ATPase alpha/beta chains family. As to quaternary structure, F-type ATPases have 2 components, CF(1) - the catalytic core - and CF(0) - the membrane proton channel. CF(1) has five subunits: alpha(3), beta(3), gamma(1), delta(1), epsilon(1). CF(0) has four main subunits: a(1), b(1), b'(1) and c(9-12).

The protein localises to the plastid. The protein resides in the chloroplast thylakoid membrane. The enzyme catalyses ATP + H2O + 4 H(+)(in) = ADP + phosphate + 5 H(+)(out). Functionally, produces ATP from ADP in the presence of a proton gradient across the membrane. The catalytic sites are hosted primarily by the beta subunits. This chain is ATP synthase subunit beta, chloroplastic, found in Tetradesmus obliquus (Green alga).